Reading from the N-terminus, the 182-residue chain is NADH-quinone oxidoreductase subunit I (182 aa).

4Fe-4S ferredoxin-type domains are found at residues 52 to 82 (LTRD…LQKA) and 92 to 121 (EFFR…LTPD). 8 residues coordinate [4Fe-4S] cluster: cysteine 62, cysteine 65, cysteine 68, cysteine 72, cysteine 101, cysteine 104, cysteine 107, and cysteine 111.

This sequence belongs to the complex I 23 kDa subunit family. In terms of assembly, NDH-1 is composed of 13 different subunits. Subunits NuoA, H, J, K, L, M, N constitute the membrane sector of the complex. [4Fe-4S] cluster is required as a cofactor.

It localises to the cell inner membrane. The enzyme catalyses a quinone + NADH + 5 H(+)(in) = a quinol + NAD(+) + 4 H(+)(out). Functionally, NDH-1 shuttles electrons from NADH, via FMN and iron-sulfur (Fe-S) centers, to quinones in the respiratory chain. The immediate electron acceptor for the enzyme in this species is believed to be ubiquinone. Couples the redox reaction to proton translocation (for every two electrons transferred, four hydrogen ions are translocated across the cytoplasmic membrane), and thus conserves the redox energy in a proton gradient. This is NADH-quinone oxidoreductase subunit I from Pseudomonas entomophila (strain L48).